A 235-amino-acid polypeptide reads, in one-letter code: Serine/arginine-rich splicing factor 7 (235 aa).

The RRM domain occupies 11 to 84 (TKVYVGNLGT…SRVRVELSTG (74 aa)). N6-acetyllysine; alternate is present on Lys-24. A Glycyl lysine isopeptide (Lys-Gly) (interchain with G-Cter in SUMO2); alternate cross-link involves residue Lys-24. At Ser-32 the chain carries Phosphoserine. The tract at residues 81–98 (LSTGMPRRSRFDRPPARR) is sufficient for interaction with NXF1. Residues 104–120 (DRCYECGEKGHYAYDCH) form a CCHC-type zinc finger. Over residues 123 to 180 (SRRRRSRSRSRSHSRSRGRRYSRSRSRSRGRRSRSASPRRSRSVSLRRSRSASLRRSR) the composition is skewed to basic residues. Positions 123–235 (SRRRRSRSRS…RRSASPERVD (113 aa)) are disordered. 4 repeat units span residues 153–160 (RRSRSASP), 161–168 (RRSRSVSL), 169–176 (RRSRSASL), and 177–184 (RRSRSGSI). The 6 X 8 AA repeats of R-R-S-R-S-X-S-X stretch occupies residues 153-223 (RRSRSASPRR…SPKRSRSPSG (71 aa)). Residues Ser-163, Ser-165, and Ser-167 each carry the phosphoserine modification. Residues Ser-181, Ser-183, Ser-189, Ser-191, and Ser-193 each carry the phosphoserine modification. Residues 187-219 (SRSRSRSRSRSRSLSRPRSSRSKSRSPSPKRSR) show a composition bias toward basic residues. The stretch at 208–215 (SKSRSPSP) is one 5; approximate repeat. A 6; approximate repeat occupies 216 to 223 (KRSRSPSG). Residues Ser-228 and Ser-230 each carry the phosphoserine modification.

The protein belongs to the splicing factor SR family. In terms of assembly, found in large molecular weight complexes containing CCNL1 and the p110 isoforms of either CDC2L1 or CDC2L2. Interacts with CCNL2 and CPSF6. Interacts with NXF1. Interacts with YTHDC1. In terms of processing, extensively phosphorylated on serine residues in the RS domain.

It localises to the nucleus. The protein resides in the cytoplasm. Functionally, required for pre-mRNA splicing. Represses the splicing of MAPT/Tau exon 10. May function as export adapter involved in mRNA nuclear export such as of histone H2A. Binds mRNA which is thought to be transferred to the NXF1-NXT1 heterodimer for export (TAP/NXF1 pathway); enhances NXF1-NXT1 RNA-binding activity. RNA-binding is semi-sequence specific. This is Serine/arginine-rich splicing factor 7 (SRSF7) from Bos taurus (Bovine).